Here is a 148-residue protein sequence, read N- to C-terminus: UPF0260 protein YcgN (148 aa).

It belongs to the UPF0260 family.

The chain is UPF0260 protein YcgN from Salmonella paratyphi A (strain AKU_12601).